Consider the following 60-residue polypeptide: Three-finger toxin Mnn I (60 aa).

Intrachain disulfides connect Cys3–Cys22, Cys17–Cys39, Cys41–Cys52, and Cys53–Cys58.

Belongs to the three-finger toxin family. Short-chain subfamily. Type I alpha-neurotoxin sub-subfamily. Expressed by the venom gland.

The protein localises to the secreted. Binds to muscle nicotinic acetylcholine receptor (nAChR) and inhibit acetylcholine from binding to the receptor, thereby impairing neuromuscular transmission. The protein is Three-finger toxin Mnn I of Micrurus nigrocinctus (Central American coral snake).